A 452-amino-acid chain; its full sequence is 3-phosphoshikimate 1-carboxyvinyltransferase (452 aa).

3-phosphoshikimate-binding residues include Lys24, Ser25, and Arg29. Phosphoenolpyruvate is bound at residue Lys24. Residues Gly95 and Arg123 each contribute to the phosphoenolpyruvate site. Ser167, Gln169, Asp319, and Lys346 together coordinate 3-phosphoshikimate. Residue Gln169 coordinates phosphoenolpyruvate. Catalysis depends on Asp319, which acts as the Proton acceptor. Phosphoenolpyruvate contacts are provided by Arg350 and Arg394.

The protein belongs to the EPSP synthase family. As to quaternary structure, monomer.

The protein resides in the cytoplasm. The catalysed reaction is 3-phosphoshikimate + phosphoenolpyruvate = 5-O-(1-carboxyvinyl)-3-phosphoshikimate + phosphate. It participates in metabolic intermediate biosynthesis; chorismate biosynthesis; chorismate from D-erythrose 4-phosphate and phosphoenolpyruvate: step 6/7. Catalyzes the transfer of the enolpyruvyl moiety of phosphoenolpyruvate (PEP) to the 5-hydroxyl of shikimate-3-phosphate (S3P) to produce enolpyruvyl shikimate-3-phosphate and inorganic phosphate. This chain is 3-phosphoshikimate 1-carboxyvinyltransferase, found in Phenylobacterium zucineum (strain HLK1).